Consider the following 640-residue polypeptide: Chaperone protein HtpG (640 aa).

Positions 1–343 (MQTAENVEHL…SNDLPLNVSR (343 aa)) are a; substrate-binding. Positions 344 to 564 (EILQESKDID…THDMSGNLGR (221 aa)) are b. Residues 565–640 (LLKSAGQKVP…LLLQNILSGK (76 aa)) form a c region.

This sequence belongs to the heat shock protein 90 family. In terms of assembly, homodimer.

The protein resides in the cytoplasm. Its function is as follows. Molecular chaperone. Has ATPase activity. The protein is Chaperone protein HtpG of Nitrosomonas eutropha (strain DSM 101675 / C91 / Nm57).